Here is a 602-residue protein sequence, read N- to C-terminus: (R)-limonene synthase (602 aa).

Positions 356, 360, 500, 504, and 508 each coordinate Mg(2+). The short motif at 356 to 360 is the DDXXD motif element; sequence DDVYD.

The protein belongs to the terpene synthase family. Mg(2+) is required as a cofactor. Mn(2+) serves as cofactor.

The enzyme catalyses (2E)-geranyl diphosphate = (4R)-limonene + diphosphate. Its function is as follows. Catalyzes the formation of (R)-(+)-limonene, terpinolene, (1R,5S)-(+)-camphene, (1R,5R)-(+)-alpha-pinene, beta-myrcene and traces of alpha-phellandrene. The sequence is that of (R)-limonene synthase from Lavandula angustifolia (Lavender).